We begin with the raw amino-acid sequence, 430 residues long: Glutamate-1-semialdehyde 2,1-aminomutase (430 aa).

Lys265 carries the N6-(pyridoxal phosphate)lysine modification.

The protein belongs to the class-III pyridoxal-phosphate-dependent aminotransferase family. HemL subfamily. In terms of assembly, homodimer. The cofactor is pyridoxal 5'-phosphate.

Its subcellular location is the cytoplasm. The enzyme catalyses (S)-4-amino-5-oxopentanoate = 5-aminolevulinate. The protein operates within porphyrin-containing compound metabolism; protoporphyrin-IX biosynthesis; 5-aminolevulinate from L-glutamyl-tRNA(Glu): step 2/2. This Helicobacter pylori (strain ATCC 700392 / 26695) (Campylobacter pylori) protein is Glutamate-1-semialdehyde 2,1-aminomutase (hemL).